The sequence spans 217 residues: Large ribosomal subunit protein uL29m (217 aa).

The protein belongs to the universal ribosomal protein uL29 family. In terms of assembly, component of the mitochondrial large ribosomal subunit. Mature mitochondrial ribosomes consist of a small (37S) and a large (54S) subunit. The 37S subunit contains at least 33 different proteins and 1 molecule of RNA (15S). The 54S subunit contains at least 45 different proteins and 1 molecule of RNA (21S).

It localises to the mitochondrion. This is Large ribosomal subunit protein uL29m (mrpl4) from Neosartorya fischeri (strain ATCC 1020 / DSM 3700 / CBS 544.65 / FGSC A1164 / JCM 1740 / NRRL 181 / WB 181) (Aspergillus fischerianus).